The primary structure comprises 272 residues: 2,3,4,5-tetrahydropyridine-2,6-dicarboxylate N-succinyltransferase (272 aa).

Positions 104 and 141 each coordinate substrate.

It belongs to the transferase hexapeptide repeat family. As to quaternary structure, homotrimer.

The protein localises to the cytoplasm. It catalyses the reaction (S)-2,3,4,5-tetrahydrodipicolinate + succinyl-CoA + H2O = (S)-2-succinylamino-6-oxoheptanedioate + CoA. Its pathway is amino-acid biosynthesis; L-lysine biosynthesis via DAP pathway; LL-2,6-diaminopimelate from (S)-tetrahydrodipicolinate (succinylase route): step 1/3. The polypeptide is 2,3,4,5-tetrahydropyridine-2,6-dicarboxylate N-succinyltransferase (Dechloromonas aromatica (strain RCB)).